Reading from the N-terminus, the 240-residue chain is Coatomer subunit delta (240 aa).

Residues 215–226 (AAAKASSAPKAK) are compositionally biased toward low complexity. The segment at 215 to 240 (AAAKASSAPKAKGMQLGKKKNTSLLY) is disordered. Basic residues predominate over residues 231–240 (GKKKNTSLLY).

This sequence belongs to the adaptor complexes medium subunit family. Delta-COP subfamily. As to quaternary structure, oligomeric complex that consists of at least the alpha, beta, beta', gamma, delta, epsilon and zeta subunits.

It is found in the cytoplasm. It localises to the nucleus. Functionally, the coatomer is a cytosolic protein complex that binds to dilysine motifs and reversibly associates with Golgi non-clathrin-coated vesicles, which further mediate biosynthetic protein transport from the ER, via the Golgi up to the trans Golgi network. Coatomer complex is required for budding from Golgi membranes, and is essential for the retrograde Golgi-to-ER transport of dilysine-tagged proteins. The sequence is that of Coatomer subunit delta (ret2) from Schizosaccharomyces pombe (strain 972 / ATCC 24843) (Fission yeast).